The following is a 377-amino-acid chain: Acetylornithine aminotransferase (377 aa).

Pyridoxal 5'-phosphate is bound by residues 94–95 and F121; that span reads GT. Residue R124 coordinates N(2)-acetyl-L-ornithine. Position 206 to 209 (206 to 209) interacts with pyridoxal 5'-phosphate; the sequence is DEIQ. Position 235 is an N6-(pyridoxal phosphate)lysine (K235). A N(2)-acetyl-L-ornithine-binding site is contributed by S263. T264 provides a ligand contact to pyridoxal 5'-phosphate.

The protein belongs to the class-III pyridoxal-phosphate-dependent aminotransferase family. ArgD subfamily. Homodimer. It depends on pyridoxal 5'-phosphate as a cofactor.

The protein localises to the cytoplasm. It catalyses the reaction N(2)-acetyl-L-ornithine + 2-oxoglutarate = N-acetyl-L-glutamate 5-semialdehyde + L-glutamate. Its pathway is amino-acid biosynthesis; L-arginine biosynthesis; N(2)-acetyl-L-ornithine from L-glutamate: step 4/4. The protein is Acetylornithine aminotransferase of Lactococcus lactis subsp. lactis (strain IL1403) (Streptococcus lactis).